The primary structure comprises 248 residues: 14-3-3-like protein 2 (248 aa).

Belongs to the 14-3-3 family. As to quaternary structure, interacts with daf-16. Interacts with sir-2.1. Interacts with hcf-1.

The protein localises to the cytoplasm. It is found in the nucleus. Its function is as follows. Required for extension of lifespan by sir-2.1. Required to modulate lifespan, in concert with hcf-1, acting redundantly with 14-3-3-like protein par-5. Promotes nuclear export of yap-1. Negatively regulates the transcriptional activity of daf-16 by sequestering it to the cytoplasm. This chain is 14-3-3-like protein 2, found in Caenorhabditis elegans.